Here is a 205-residue protein sequence, read N- to C-terminus: Guanylate kinase (205 aa).

The 179-residue stretch at 6 to 184 folds into the Guanylate kinase-like domain; sequence GLLLVVSGPS…SAKEIEGIIS (179 aa). 13-20 provides a ligand contact to ATP; that stretch reads GPSGAGKG.

This sequence belongs to the guanylate kinase family.

The protein localises to the cytoplasm. It catalyses the reaction GMP + ATP = GDP + ADP. Its function is as follows. Essential for recycling GMP and indirectly, cGMP. This is Guanylate kinase from Clostridioides difficile (strain 630) (Peptoclostridium difficile).